Here is a 483-residue protein sequence, read N- to C-terminus: MSPQTETKASVGFKAGVKEYKLTYYTPEYETKDTDILAAFRVTPQPGVPPEEAGAAVAAESSTGTWTTVWTDGLTSLDRYKGRCYHIEPVPGEESQFIAYVAYPLDLFEEGSVTNMFTSIVGNVFGFKALAALRLEDLRIPPAYTKTFQGPPHGIQVERDKLNKYGRPLLGCTIKPKLGLSAKNYGRAVYECLRGGLDFTKDDENVNSQPFMRWRDRFLFCAEAIYKSQAETGEIKGHYLNATAGTCEEMIKRAVFARELGVPIVMHDYLTGGFTANTSLAHYCRDNGLLLHIHRAMHAVIDRQKNHGMHFRVLAKALRLSGGDHIHAGTVVGKLEGDRESTLGFVDLLRDDYVEKDRSRGIFFTQDWVSLPGVLPVASGGIHVWHMPALTEIFGDDSVLQFGGGTLGHPWGNAPGAVANRVALEACVQARNEGRDLAVEGNEIIREACKWSPELAAACEVWKEIRFNFPTIDKLDPSAEKVA.

Residues 1 to 2 constitute a propeptide that is removed on maturation; sequence MS. Residues asparagine 123 and threonine 173 each contribute to the substrate site. Lysine 175 functions as the Proton acceptor in the catalytic mechanism. Position 177 (lysine 177) interacts with substrate. Mg(2+)-binding residues include lysine 201, aspartate 203, and glutamate 204. Position 201 is an N6-carboxylysine (lysine 201). Serine 208 bears the Phosphoserine mark. Histidine 294 functions as the Proton acceptor in the catalytic mechanism. 2 residues coordinate substrate: arginine 295 and histidine 327. Threonine 330 is subject to Phosphothreonine. A substrate-binding site is contributed by serine 379.

Belongs to the RuBisCO large chain family. Type I subfamily. In terms of assembly, heterohexadecamer of 8 large chains and 8 small chains; disulfide-linked. The disulfide link is formed within the large subunit homodimers. Mg(2+) is required as a cofactor. In terms of processing, the disulfide bond which can form in the large chain dimeric partners within the hexadecamer appears to be associated with oxidative stress and protein turnover.

The protein resides in the plastid. It is found in the chloroplast. The enzyme catalyses 2 (2R)-3-phosphoglycerate + 2 H(+) = D-ribulose 1,5-bisphosphate + CO2 + H2O. The catalysed reaction is D-ribulose 1,5-bisphosphate + O2 = 2-phosphoglycolate + (2R)-3-phosphoglycerate + 2 H(+). RuBisCO catalyzes two reactions: the carboxylation of D-ribulose 1,5-bisphosphate, the primary event in carbon dioxide fixation, as well as the oxidative fragmentation of the pentose substrate in the photorespiration process. Both reactions occur simultaneously and in competition at the same active site. This is Ribulose bisphosphate carboxylase large chain from Aethionema cordifolium (Lebanon stonecress).